The sequence spans 482 residues: Glutamate--tRNA ligase (482 aa).

The 'HIGH' region signature appears at 9 to 19 (PSPTGPLHIGG). Residues 250–254 (KMSKR) carry the 'KMSKS' region motif. K253 lines the ATP pocket.

This sequence belongs to the class-I aminoacyl-tRNA synthetase family. Glutamate--tRNA ligase type 1 subfamily. Monomer.

The protein localises to the cytoplasm. It carries out the reaction tRNA(Glu) + L-glutamate + ATP = L-glutamyl-tRNA(Glu) + AMP + diphosphate. In terms of biological role, catalyzes the attachment of glutamate to tRNA(Glu) in a two-step reaction: glutamate is first activated by ATP to form Glu-AMP and then transferred to the acceptor end of tRNA(Glu). The protein is Glutamate--tRNA ligase of Desulforamulus reducens (strain ATCC BAA-1160 / DSM 100696 / MI-1) (Desulfotomaculum reducens).